A 503-amino-acid chain; its full sequence is MEFSVKSGSPEKQRSACIVVGVFEPRRLSPIAEQLDKISDGYISALLRRGELEGKPGQTLLLHHVPNVLSERILLIGCGKERELDERQYKQVIQKTINTLNDTGSMEAVCFLTELHVKGRNNYWKVRQAVETAKETLYSSDQLKTNKSEPRRPLRKMVFNVPTRRELTSGERAIQHGLAIAAGIKAAKDLGNMPPNICNAAYLASQARQLADSYSKNVITRVIGEQQMKELGMHSYLAVGQGSQNESLMSVIEYKGNASEDARPIVLVGKGLTFDSGGISIKPSEGMDEMKYDMCGAAAVYGVMRMVAELQLPINVIGVLAGCENMPGGRAYRPGDVLTTMSGQTVEVLNTDAEGRLVLCDVLTYVERFEPEAVIDVATLTGACVIALGHHITGLMANHNPLAHELIAASEQSGDRAWRLPLGDEYQEQLESNFADMANIGGRPGGAITAGCFLSRFTRKYNWAHLDIAGTAWRSGKAKGATGRPVALLAQFLLNRAGFNGEE.

Mn(2+) is bound by residues Lys270 and Asp275. The active site involves Lys282. Positions 293, 352, and 354 each coordinate Mn(2+). The active site involves Arg356.

It belongs to the peptidase M17 family. The cofactor is Mn(2+).

It localises to the cytoplasm. The enzyme catalyses Release of an N-terminal amino acid, Xaa-|-Yaa-, in which Xaa is preferably Leu, but may be other amino acids including Pro although not Arg or Lys, and Yaa may be Pro. Amino acid amides and methyl esters are also readily hydrolyzed, but rates on arylamides are exceedingly low.. It catalyses the reaction Release of an N-terminal amino acid, preferentially leucine, but not glutamic or aspartic acids.. Functionally, presumably involved in the processing and regular turnover of intracellular proteins. Catalyzes the removal of unsubstituted N-terminal amino acids from various peptides. In Escherichia fergusonii (strain ATCC 35469 / DSM 13698 / CCUG 18766 / IAM 14443 / JCM 21226 / LMG 7866 / NBRC 102419 / NCTC 12128 / CDC 0568-73), this protein is Probable cytosol aminopeptidase.